A 710-amino-acid polypeptide reads, in one-letter code: Solute carrier organic anion transporter family member 3A1 (710 aa).

Residue Met-1 is modified to N-acetylmethionine. The segment covering 1-15 has biased composition (gly residues); it reads MQGKKPGGSSGGGRS. A disordered region spans residues 1-25; it reads MQGKKPGGSSGGGRSGELQGDEAQR. At 1–40 the chain is on the cytoplasmic side; it reads MQGKKPGGSSGGGRSGELQGDEAQRNKKKKKKVSCFSNIK. A helical membrane pass occupies residues 41–60; it reads IFLVSECALMLAQGTVGAYL. The Extracellular portion of the chain corresponds to 61–79; the sequence is VSVLTTLERRFNLQSADVG. A helical membrane pass occupies residues 80 to 100; that stretch reads VIASSFEIGNLALILFVSYFG. Residues 101-106 lie on the Cytoplasmic side of the membrane; it reads ARGHRP. The chain crosses the membrane as a helical span at residues 107–131; that stretch reads RLIGCGGIVMALGALLSALPEFLTH. Residues 132 to 174 are Extracellular-facing; the sequence is QYKYEAGEIRWGAEGRDVCAANGSGGDEGPDPDLICRNRTATN. N-linked (GlcNAc...) asparagine glycans are attached at residues Asn-153 and Asn-169. Residues 175–203 form a helical membrane-spanning segment; that stretch reads MMYLLLIGAQVLLGIGATPVQPLGVSYID. Over 204-222 the chain is Cytoplasmic; that stretch reads DHVRRKDSSLYIGILFTML. The chain crosses the membrane as a helical span at residues 223–243; it reads VFGPACGFILGSFCTKIYVDA. Topologically, residues 244–261 are extracellular; that stretch reads VFIDTSNLDITPDDPRWI. Residues 262 to 286 traverse the membrane as a helical segment; it reads GAWWGGFLLCGALLFFSSLLMFGFP. At 287 to 344 the chain is on the cytoplasmic side; the sequence is QSLPPHSEPAMESEQAMLSEREYERPKPSNGVLRHPLEPDSSASCFQQLRVIPKVTKH. Residues 345–366 form a helical membrane-spanning segment; sequence LLSNPVFTCIILAACMEIAVVA. The Extracellular portion of the chain corresponds to 367–386; that stretch reads GFAAFLGKYLEQQFNLTTSS. The N-linked (GlcNAc...) asparagine glycan is linked to Asn-381. A helical transmembrane segment spans residues 387-410; sequence ANQLLGMTAIPCACLGIFLGGLLV. Over 411–414 the chain is Cytoplasmic; sequence KKLS. A helical transmembrane segment spans residues 415–438; the sequence is LSALGAIRMAMLVNLVSTACYVSF. Topologically, residues 439–539 are extracellular; the sequence is LFLGCDTGPV…PGCQEAFLTF (101 aa). A glycan (N-linked (GlcNAc...) asparagine) is linked at Asn-457. The Kazal-like domain occupies 465–513; sequence LDPYSPCNNNCECQTDSFTPVCGADGITYLSACFAGCNSTNLTGCACLT. 3 disulfide bridges follow: Cys-471–Cys-501, Cys-477–Cys-497, and Cys-486–Cys-511. Residues Asn-502, Asn-505, and Asn-519 are each glycosylated (N-linked (GlcNAc...) asparagine). A helical membrane pass occupies residues 540-562; the sequence is LCVMCICSLIGAMAQTPSVIILI. Residues 563–571 are Cytoplasmic-facing; the sequence is RTVSPELKS. The chain crosses the membrane as a helical span at residues 572–597; it reads YALGVLFLLLRLLGFIPPPLIFGAGI. Over 598–630 the chain is Extracellular; it reads DSTCLFWSTFCGEQGACVLYDNVVYRYLYVSIA. Residues 631-648 traverse the membrane as a helical segment; that stretch reads IALKSFAFILYTTTWQCL. Residues 649 to 705 lie on the Cytoplasmic side of the membrane; sequence RKNYKRYIKNHEGGLSTSEFFASTLTLDNLGRDPVPANQTHRTKFIYNLEDHEWCEN.

Belongs to the organo anion transporter (TC 2.A.60) family. Generally the expression of isoform 1 is higher than that of isoform 2. In terms of tissue distribution, expressed in placental trophoblasts. Expressed in pancreas, kidney, liver, lung, brain, heart, cerebellum, peripheral blood leukocyte, colon, small intestine, ovary, testis, prostate, thyroid, thymus and spleen. Expressed in fetal brain, heart, kidney, liver, lung, skeletal muscle, spleen and pancreas. In testis, detected in spermatogonia at different stages and absent from Sertoli cells. Expressed in the choroid plexus epithelium, at the basolateral membrane. In brain, also very abundant in the gray matter of the frontal cortex, but not associated with neuronal cell bodies. Not detected in the white matter. As to expression, expressed in heart, brain, cerebellum, testis, lung, thyroid, spoleen and liver. In testis, primarily localized to the basal membrane of Sertoli cells and weakly expressed within the tubules. In testis, also present in spermatogonia at different stages. In brain, expressed in the choroid plexus epithelium, at the apical membrane as well as in the subapical intracellular vesicular compartments. In brain, also associated with neuronal bodies and axons in both the gray and the white matters of the frontal cortex.

The protein localises to the basolateral cell membrane. The protein resides in the apical cell membrane. Its subcellular location is the basal cell membrane. The enzyme catalyses L-thyroxine(out) = L-thyroxine(in). The catalysed reaction is prostaglandin E1(out) = prostaglandin E1(in). It carries out the reaction prostaglandin E2(out) = prostaglandin E2(in). It catalyses the reaction prostaglandin F2alpha(out) = prostaglandin F2alpha(in). The enzyme catalyses (5Z,8Z,11Z,14Z)-eicosatetraenoate(out) = (5Z,8Z,11Z,14Z)-eicosatetraenoate(in). The catalysed reaction is taurocholate(out) = taurocholate(in). It carries out the reaction glycocholate(out) = glycocholate(in). It catalyses the reaction estrone 3-sulfate(out) = estrone 3-sulfate(in). The enzyme catalyses argipressin(out) = argipressin(in). With respect to regulation, stimulated by extracellular acidic pH. Its function is as follows. Putative organic anion antiporter with apparent broad substrate specificity. Recognizes various substrates including thyroid hormone L-thyroxine, prostanoids such as prostaglandin E1 and E2, bile acids such as taurocholate, glycolate and glycochenodeoxycholate and peptide hormones such as L-arginine vasopressin, likely operating in a tissue-specific manner. The transport mechanism, its electrogenicity and potential tissue-specific counterions remain to be elucidated. The polypeptide is Solute carrier organic anion transporter family member 3A1 (SLCO3A1) (Homo sapiens (Human)).